Here is a 138-residue protein sequence, read N- to C-terminus: Transcription antitermination protein NusB (138 aa).

Belongs to the NusB family.

In terms of biological role, involved in transcription antitermination. Required for transcription of ribosomal RNA (rRNA) genes. Binds specifically to the boxA antiterminator sequence of the ribosomal RNA (rrn) operons. The protein is Transcription antitermination protein NusB of Tolumonas auensis (strain DSM 9187 / NBRC 110442 / TA 4).